We begin with the raw amino-acid sequence, 487 residues long: Betaine aldehyde dehydrogenase (487 aa).

Positions 26 and 93 each coordinate K(+). Residue G150 to W152 coordinates NAD(+). The active-site Charge relay system is K162. NAD(+) contacts are provided by residues K176–E179 and S229–T232. K(+) is bound at residue L244. The Proton acceptor role is filled by E250. NAD(+) is bound by residues G252, C284, and E384. C284 (nucleophile) is an active-site residue. At C284 the chain carries Cysteine sulfenic acid (-SOH). K(+) contacts are provided by K454 and G457. Residue E461 is the Charge relay system of the active site.

It belongs to the aldehyde dehydrogenase family. In terms of assembly, dimer of dimers. The cofactor is K(+).

The enzyme catalyses betaine aldehyde + NAD(+) + H2O = glycine betaine + NADH + 2 H(+). It participates in amine and polyamine biosynthesis; betaine biosynthesis via choline pathway; betaine from betaine aldehyde: step 1/1. In terms of biological role, involved in the biosynthesis of the osmoprotectant glycine betaine. Catalyzes the irreversible oxidation of betaine aldehyde to the corresponding acid. This Rhizobium etli (strain ATCC 51251 / DSM 11541 / JCM 21823 / NBRC 15573 / CFN 42) protein is Betaine aldehyde dehydrogenase.